The primary structure comprises 284 residues: Diaminopimelate epimerase (284 aa).

Substrate-binding residues include Asn-20, Gln-53, and Asn-73. Residue Cys-82 is the Proton donor of the active site. Residues 83–84 (GN), Asn-167, Asn-200, and 218–219 (ER) contribute to the substrate site. Cys-227 (proton acceptor) is an active-site residue. 228–229 (GS) lines the substrate pocket.

It belongs to the diaminopimelate epimerase family. As to quaternary structure, homodimer.

It localises to the cytoplasm. The enzyme catalyses (2S,6S)-2,6-diaminopimelate = meso-2,6-diaminopimelate. It participates in amino-acid biosynthesis; L-lysine biosynthesis via DAP pathway; DL-2,6-diaminopimelate from LL-2,6-diaminopimelate: step 1/1. Functionally, catalyzes the stereoinversion of LL-2,6-diaminopimelate (L,L-DAP) to meso-diaminopimelate (meso-DAP), a precursor of L-lysine and an essential component of the bacterial peptidoglycan. The chain is Diaminopimelate epimerase from Xanthomonas euvesicatoria pv. vesicatoria (strain 85-10) (Xanthomonas campestris pv. vesicatoria).